The chain runs to 142 residues: Large ribosomal subunit protein bL17 (142 aa).

The protein belongs to the bacterial ribosomal protein bL17 family. In terms of assembly, part of the 50S ribosomal subunit. Contacts protein L32.

The polypeptide is Large ribosomal subunit protein bL17 (Methylocella silvestris (strain DSM 15510 / CIP 108128 / LMG 27833 / NCIMB 13906 / BL2)).